The following is a 176-amino-acid chain: Large ribosomal subunit protein uL10 (176 aa).

The protein belongs to the universal ribosomal protein uL10 family. In terms of assembly, part of the ribosomal stalk of the 50S ribosomal subunit. The N-terminus interacts with L11 and the large rRNA to form the base of the stalk. The C-terminus forms an elongated spine to which L12 dimers bind in a sequential fashion forming a multimeric L10(L12)X complex.

Functionally, forms part of the ribosomal stalk, playing a central role in the interaction of the ribosome with GTP-bound translation factors. This Natranaerobius thermophilus (strain ATCC BAA-1301 / DSM 18059 / JW/NM-WN-LF) protein is Large ribosomal subunit protein uL10.